A 90-amino-acid chain; its full sequence is Progonadoliberin-3 (90 aa).

An N-terminal signal peptide occupies residues 1–23 (MEAGSRVIMQVLLLALVVQVTLS). Glutamine 24 is subject to Pyrrolidone carboxylic acid. At glycine 33 the chain carries Glycine amide.

The protein belongs to the GnRH family. Expressed only in the terminal nerve nucleus of the telencephalon.

The protein resides in the secreted. Its function is as follows. Stimulates the secretion of gonadotropins. The chain is Progonadoliberin-3 (gnrh3) from Haplochromis burtoni (Burton's mouthbrooder).